A 447-amino-acid chain; its full sequence is ATP-dependent protease ATPase subunit HslU (447 aa).

Residues Ile18, 60–65, Asp259, Glu325, and Arg397 each bind ATP; that span reads GVGKTE.

The protein belongs to the ClpX chaperone family. HslU subfamily. As to quaternary structure, a double ring-shaped homohexamer of HslV is capped on each side by a ring-shaped HslU homohexamer. The assembly of the HslU/HslV complex is dependent on binding of ATP.

The protein resides in the cytoplasm. Functionally, ATPase subunit of a proteasome-like degradation complex; this subunit has chaperone activity. The binding of ATP and its subsequent hydrolysis by HslU are essential for unfolding of protein substrates subsequently hydrolyzed by HslV. HslU recognizes the N-terminal part of its protein substrates and unfolds these before they are guided to HslV for hydrolysis. This chain is ATP-dependent protease ATPase subunit HslU, found in Burkholderia cenocepacia (strain ATCC BAA-245 / DSM 16553 / LMG 16656 / NCTC 13227 / J2315 / CF5610) (Burkholderia cepacia (strain J2315)).